The chain runs to 182 residues: Alkyl hydroperoxide reductase AhpD (182 aa).

The Proton donor role is filled by cysteine 132. Residues cysteine 132 and cysteine 135 are joined by a disulfide bond. Catalysis depends on cysteine 135, which acts as the Cysteine sulfenic acid (-SOH) intermediate.

It belongs to the AhpD family.

The enzyme catalyses N(6)-[(R)-dihydrolipoyl]-L-lysyl-[lipoyl-carrier protein] + a hydroperoxide = N(6)-[(R)-lipoyl]-L-lysyl-[lipoyl-carrier protein] + an alcohol + H2O. In terms of biological role, antioxidant protein with alkyl hydroperoxidase activity. Required for the reduction of the AhpC active site cysteine residues and for the regeneration of the AhpC enzyme activity. This is Alkyl hydroperoxide reductase AhpD from Bradyrhizobium diazoefficiens (strain JCM 10833 / BCRC 13528 / IAM 13628 / NBRC 14792 / USDA 110).